The following is a 312-amino-acid chain: Small ribosomal subunit biogenesis GTPase RsgA (312 aa).

The CP-type G domain occupies 86–245 (QSFLKRPAVA…LADTPGFNRP (160 aa)). GTP is bound by residues 135–138 (TKID) and 187–195 (GPSGVGKTS). The Zn(2+) site is built by Cys-270, Cys-275, His-277, and Cys-283.

Belongs to the TRAFAC class YlqF/YawG GTPase family. RsgA subfamily. As to quaternary structure, monomer. Associates with 30S ribosomal subunit, binds 16S rRNA. The cofactor is Zn(2+).

The protein localises to the cytoplasm. Functionally, one of several proteins that assist in the late maturation steps of the functional core of the 30S ribosomal subunit. Helps release RbfA from mature subunits. May play a role in the assembly of ribosomal proteins into the subunit. Circularly permuted GTPase that catalyzes slow GTP hydrolysis, GTPase activity is stimulated by the 30S ribosomal subunit. This Prochlorococcus marinus (strain NATL1A) protein is Small ribosomal subunit biogenesis GTPase RsgA.